Reading from the N-terminus, the 297-residue chain is Aspartate carbamoyltransferase catalytic subunit (297 aa).

Residues R49 and T50 each contribute to the carbamoyl phosphate site. L-aspartate is bound at residue K77. Residues R99, H129, and Q132 each coordinate carbamoyl phosphate. R162 and R215 together coordinate L-aspartate. Carbamoyl phosphate-binding residues include G256 and P257.

It belongs to the aspartate/ornithine carbamoyltransferase superfamily. ATCase family. As to quaternary structure, heterododecamer (2C3:3R2) of six catalytic PyrB chains organized as two trimers (C3), and six regulatory PyrI chains organized as three dimers (R2).

It carries out the reaction carbamoyl phosphate + L-aspartate = N-carbamoyl-L-aspartate + phosphate + H(+). It functions in the pathway pyrimidine metabolism; UMP biosynthesis via de novo pathway; (S)-dihydroorotate from bicarbonate: step 2/3. Catalyzes the condensation of carbamoyl phosphate and aspartate to form carbamoyl aspartate and inorganic phosphate, the committed step in the de novo pyrimidine nucleotide biosynthesis pathway. The chain is Aspartate carbamoyltransferase catalytic subunit from Legionella pneumophila subsp. pneumophila (strain Philadelphia 1 / ATCC 33152 / DSM 7513).